We begin with the raw amino-acid sequence, 182 residues long: UPF0254 protein MK0012 (182 aa).

It belongs to the UPF0254 family.

The protein is UPF0254 protein MK0012 of Methanopyrus kandleri (strain AV19 / DSM 6324 / JCM 9639 / NBRC 100938).